The chain runs to 119 residues: UPF0342 protein GTNG_0551 (119 aa).

Belongs to the UPF0342 family.

This chain is UPF0342 protein GTNG_0551, found in Geobacillus thermodenitrificans (strain NG80-2).